Here is a 219-residue protein sequence, read N- to C-terminus: Interleukin-12 subunit alpha (219 aa).

The first 22 residues, 1 to 22 (MCPARSLLLVATLVLLDYLSLA), serve as a signal peptide directing secretion. N-linked (GlcNAc...) asparagine glycans are attached at residues Asn-24, Asn-93, and Asn-107. 3 cysteine pairs are disulfide-bonded: Cys-37/Cys-110, Cys-64/Cys-196, and Cys-85/Cys-123.

Belongs to the IL-6 superfamily. In terms of assembly, heterodimer with IL12B; disulfide-linked. This heterodimer is known as interleukin IL-12. Heterodimer with EBI3/IL27B; not disulfide-linked. This heterodimer is known as interleukin IL-35. Interacts with NBR1; this interaction promotes IL-12 secretion.

The protein localises to the secreted. In terms of biological role, heterodimerizes with IL12B to form the IL-12 cytokine or with EBI3/IL27B to form the IL-35 cytokine. IL-12 is primarily produced by professional antigen-presenting cells (APCs) such as B-cells and dendritic cells (DCs) as well as macrophages and granulocytes and regulates T-cell and natural killer-cell responses, induces the production of interferon-gamma (IFN-gamma), favors the differentiation of T-helper 1 (Th1) cells and is an important link between innate resistance and adaptive immunity. Mechanistically, exerts its biological effects through a receptor composed of IL12R1 and IL12R2 subunits. Binding to the receptor results in the rapid tyrosine phosphorylation of a number of cellular substrates including the JAK family kinases TYK2 and JAK2. In turn, recruited STAT4 gets phosphorylated and translocates to the nucleus where it regulates cytokine/growth factor responsive genes. As part of IL-35, plays essential roles in maintaining the immune homeostasis of the liver microenvironment and also functions as an immune-suppressive cytokine. Mediates biological events through unconventional receptors composed of IL12RB2 and gp130/IL6ST heterodimers or homodimers. Signaling requires the transcription factors STAT1 and STAT4, which form a unique heterodimer that binds to distinct DNA sites. The sequence is that of Interleukin-12 subunit alpha (IL12A) from Cercocebus atys (Sooty mangabey).